A 232-amino-acid polypeptide reads, in one-letter code: Large ribosomal subunit protein uL1 (232 aa).

This sequence belongs to the universal ribosomal protein uL1 family. As to quaternary structure, part of the 50S ribosomal subunit.

In terms of biological role, binds directly to 23S rRNA. The L1 stalk is quite mobile in the ribosome, and is involved in E site tRNA release. Protein L1 is also a translational repressor protein, it controls the translation of the L11 operon by binding to its mRNA. This is Large ribosomal subunit protein uL1 from Chlamydia pneumoniae (Chlamydophila pneumoniae).